We begin with the raw amino-acid sequence, 251 residues long: Elongation factor Ts (251 aa).

The segment at 82–85 is involved in Mg(2+) ion dislocation from EF-Tu; that stretch reads TDFV. A disordered region spans residues 215–251; that stretch reads QMGQKAPEPVAAAPQVEEKAPEPAAKDNPPAKGKKKK. The segment covering 219–229 has biased composition (low complexity); it reads KAPEPVAAAPQ. Residues 230–239 show a composition bias toward basic and acidic residues; it reads VEEKAPEPAA.

The protein belongs to the EF-Ts family.

Its subcellular location is the cytoplasm. In terms of biological role, associates with the EF-Tu.GDP complex and induces the exchange of GDP to GTP. It remains bound to the aminoacyl-tRNA.EF-Tu.GTP complex up to the GTP hydrolysis stage on the ribosome. The polypeptide is Elongation factor Ts (Microcystis aeruginosa (strain NIES-843 / IAM M-2473)).